The primary structure comprises 508 residues: Photosystem II CP47 reaction center protein (508 aa).

6 consecutive transmembrane segments (helical) span residues 21–36 (SVHI…WAGS), 101–115 (IVFS…IWHW), 140–156 (GIHL…FGAF), 203–218 (IAAG…FHLS), 237–252 (VLSS…AFVV), and 457–472 (SFAL…HGAR).

The protein belongs to the PsbB/PsbC family. PsbB subfamily. As to quaternary structure, PSII is composed of 1 copy each of membrane proteins PsbA, PsbB, PsbC, PsbD, PsbE, PsbF, PsbH, PsbI, PsbJ, PsbK, PsbL, PsbM, PsbT, PsbX, PsbY, PsbZ, Psb30/Ycf12, at least 3 peripheral proteins of the oxygen-evolving complex and a large number of cofactors. It forms dimeric complexes. The cofactor is Binds multiple chlorophylls. PSII binds additional chlorophylls, carotenoids and specific lipids..

The protein resides in the plastid. It is found in the chloroplast thylakoid membrane. One of the components of the core complex of photosystem II (PSII). It binds chlorophyll and helps catalyze the primary light-induced photochemical processes of PSII. PSII is a light-driven water:plastoquinone oxidoreductase, using light energy to abstract electrons from H(2)O, generating O(2) and a proton gradient subsequently used for ATP formation. In Eucalyptus globulus subsp. globulus (Tasmanian blue gum), this protein is Photosystem II CP47 reaction center protein.